The primary structure comprises 229 residues: Large ribosomal subunit protein uL1 (229 aa).

The protein belongs to the universal ribosomal protein uL1 family. Part of the 50S ribosomal subunit.

Functionally, binds directly to 23S rRNA. The L1 stalk is quite mobile in the ribosome, and is involved in E site tRNA release. In terms of biological role, protein L1 is also a translational repressor protein, it controls the translation of the L11 operon by binding to its mRNA. This Lactiplantibacillus plantarum (strain ATCC BAA-793 / NCIMB 8826 / WCFS1) (Lactobacillus plantarum) protein is Large ribosomal subunit protein uL1.